The primary structure comprises 379 residues: Probable peptidoglycan glycosyltransferase FtsW (379 aa).

At 1–15 the chain is on the cytoplasmic side; that stretch reads MHKTEAQTYLLYDRT. A helical transmembrane segment spans residues 16-36; it reads LLLLTMGLVGIGLVMVISTSM. Residues 37–52 are Periplasmic-facing; it reads PIGVRLSEDPFYFARR. A helical transmembrane segment spans residues 53-73; sequence YAFYLGLAVVLSLVTLGIPMA. Residues 74-79 lie on the Cytoplasmic side of the membrane; it reads SWQRGS. Residues 80–100 form a helical membrane-spanning segment; sequence SLILLITLIMLLLVLIAGQSV. Over 101–113 the chain is Periplasmic; the sequence is NGAVRWLALGPWR. The helical transmembrane segment at 114–133 threads the bilayer; the sequence is IQPAELSKLALFCYLASYLV. Over 134–139 the chain is Cytoplasmic; it reads RKAEEV. The chain crosses the membrane as a helical span at residues 140–162; that stretch reads RTNFWGFCKPIGVMVLLAILLLA. Residues 163–165 are Periplasmic-facing; it reads QPD. Residues 166–183 form a helical membrane-spanning segment; sequence LGTVLVLFITTLAMLFLA. At 184–186 the chain is on the cytoplasmic side; sequence EAK. Residues 187-207 form a helical membrane-spanning segment; the sequence is IWQFLPIIGTGILAVMLLIIA. The Periplasmic segment spans residues 208–269; it reads KPYRRRRVTS…TEAHTDFICS (62 aa). Residues 270-290 traverse the membrane as a helical segment; it reads ILGEELGYFGVLLALLMVFLV. The Cytoplasmic segment spans residues 291–301; the sequence is AFRAMSIGRKA. Residues 302 to 322 traverse the membrane as a helical segment; that stretch reads LAINQIFSGFLACSIGIWFSF. Residues 323-342 lie on the Periplasmic side of the membrane; that stretch reads QTMVNVGAAAGMLPTKGLTL. The chain crosses the membrane as a helical span at residues 343 to 363; it reads PFISYGGSSMLIMLTAIVLLI. Residues 364–379 lie on the Cytoplasmic side of the membrane; the sequence is RIDFETRLAKLQAFVR.

Belongs to the SEDS family. FtsW subfamily.

It localises to the cell inner membrane. It catalyses the reaction [GlcNAc-(1-&gt;4)-Mur2Ac(oyl-L-Ala-gamma-D-Glu-L-Lys-D-Ala-D-Ala)](n)-di-trans,octa-cis-undecaprenyl diphosphate + beta-D-GlcNAc-(1-&gt;4)-Mur2Ac(oyl-L-Ala-gamma-D-Glu-L-Lys-D-Ala-D-Ala)-di-trans,octa-cis-undecaprenyl diphosphate = [GlcNAc-(1-&gt;4)-Mur2Ac(oyl-L-Ala-gamma-D-Glu-L-Lys-D-Ala-D-Ala)](n+1)-di-trans,octa-cis-undecaprenyl diphosphate + di-trans,octa-cis-undecaprenyl diphosphate + H(+). It participates in cell wall biogenesis; peptidoglycan biosynthesis. Functionally, peptidoglycan polymerase that is essential for cell division. In Moranella endobia (strain PCIT), this protein is Probable peptidoglycan glycosyltransferase FtsW.